The primary structure comprises 306 residues: Probable histidinol-phosphatase (306 aa).

This sequence belongs to the PHP hydrolase family. HisK subfamily.

It carries out the reaction L-histidinol phosphate + H2O = L-histidinol + phosphate. The protein operates within amino-acid biosynthesis; L-histidine biosynthesis; L-histidine from 5-phospho-alpha-D-ribose 1-diphosphate: step 8/9. This is Probable histidinol-phosphatase from Schizosaccharomyces pombe (strain 972 / ATCC 24843) (Fission yeast).